We begin with the raw amino-acid sequence, 367 residues long: MAFELCHTISVARLEKHKNLFLNYRNLNHFPLELLKDEGLQYLERLYMKRNSLTTLPENLAQKLPNLVELYLHSNNIVFVPEAIGSLVKLQSLDLSNNALEILCPDIGRLKSLRHLRLTNNRLKFLPPEIGKLKELQTLDLSTNHLVSLPEKLYQCQSLQYLTVDRNLLCSIPRQLCQLASLNELSMAGNRLASLPLDLGRSRELQYVYVDNNVQLKGLPSYLYNKVIGCSGCGSPVPLTENKLLSFTSGQLSIHVPAEVKSIGSATDFVLPLQELALRSLHAIFCSFLQDLSCTTPISLPKSLLELLQCPLGHCHRCSQSMFTIVYPKLFPLRETPMAGLHQGRTAVSFVAYCCSTQCLQTFDLLS.

LRR repeat units lie at residues 16 to 36, 42 to 63, 66 to 87, 89 to 111, 112 to 133, 135 to 156, 158 to 179, 181 to 202, and 204 to 226; these read KHKN…ELLK, YLER…LAQK, NLVE…IGSL, KLQS…GRLK, SLRH…IGKL, ELQT…LYQC, SLQY…LCQL, SLNE…LGRS, and ELQY…LYNK.

This Xenopus tropicalis (Western clawed frog) protein is Leucine-rich repeat-containing protein 28 (lrrc28).